An 815-amino-acid chain; its full sequence is Subtilisin-like protease SBT2.5 (815 aa).

Positions M1 to A19 are cleaved as a signal peptide. One can recognise an Inhibitor I9 domain in the interval V21–R124. Positions D120–L671 constitute a Peptidase S8 domain. Residues D160 and H234 each act as charge relay system in the active site. In terms of domain architecture, PA spans T397–Y501. N-linked (GlcNAc...) asparagine glycans are attached at residues N503 and N577. S596 functions as the Charge relay system in the catalytic mechanism. N701 carries an N-linked (GlcNAc...) asparagine glycan.

It belongs to the peptidase S8 family. Expressed in roots, leaves and flowers of mature plants.

The polypeptide is Subtilisin-like protease SBT2.5 (Arabidopsis thaliana (Mouse-ear cress)).